We begin with the raw amino-acid sequence, 91 residues long: Uteroglobin (91 aa).

A signal peptide spans 1–21 (MKLAITLALVTLALLCSPASA).

This sequence belongs to the secretoglobin family. Antiparallel homodimer; disulfide-linked. Interaction with LMBR1L is controversial. In terms of tissue distribution, synthesized in the uterus and lung.

The protein localises to the secreted. Its function is as follows. Uteroglobin binds progesterone specifically and with high affinity. It may regulate progesterone concentrations reaching the blastocyst. It is also a potent inhibitor of phospholipase A2. This Oryctolagus cuniculus (Rabbit) protein is Uteroglobin (SCGB1A1).